The following is a 59-amino-acid chain: Large ribosomal subunit protein uL30 (59 aa).

The protein belongs to the universal ribosomal protein uL30 family. In terms of assembly, part of the 50S ribosomal subunit.

In Psychrobacter sp. (strain PRwf-1), this protein is Large ribosomal subunit protein uL30.